We begin with the raw amino-acid sequence, 208 residues long: Probable nicotinate-nucleotide adenylyltransferase (208 aa).

Belongs to the NadD family.

The catalysed reaction is nicotinate beta-D-ribonucleotide + ATP + H(+) = deamido-NAD(+) + diphosphate. It functions in the pathway cofactor biosynthesis; NAD(+) biosynthesis; deamido-NAD(+) from nicotinate D-ribonucleotide: step 1/1. In terms of biological role, catalyzes the reversible adenylation of nicotinate mononucleotide (NaMN) to nicotinic acid adenine dinucleotide (NaAD). The protein is Probable nicotinate-nucleotide adenylyltransferase of Symbiobacterium thermophilum (strain DSM 24528 / JCM 14929 / IAM 14863 / T).